The chain runs to 316 residues: DNA-directed RNA polymerase subunit alpha (316 aa).

The segment at 1 to 232 (MSGNDLFPST…DLFNPLHHCS (232 aa)) is alpha N-terminal domain (alpha-NTD). The tract at residues 247–316 (KINDILVEEL…LNIYLPKEKY (70 aa)) is alpha C-terminal domain (alpha-CTD).

The protein belongs to the RNA polymerase alpha chain family. In plastids the minimal PEP RNA polymerase catalytic core is composed of four subunits: alpha, beta, beta', and beta''. When a (nuclear-encoded) sigma factor is associated with the core the holoenzyme is formed, which can initiate transcription.

Its subcellular location is the plastid. The protein resides in the chloroplast. The enzyme catalyses RNA(n) + a ribonucleoside 5'-triphosphate = RNA(n+1) + diphosphate. In terms of biological role, DNA-dependent RNA polymerase catalyzes the transcription of DNA into RNA using the four ribonucleoside triphosphates as substrates. The chain is DNA-directed RNA polymerase subunit alpha from Mesostigma viride (Green alga).